A 553-amino-acid polypeptide reads, in one-letter code: MNNLSLKAWRSTVSCGPNLRQCVPRISGAGSRRAQCRESSTGVATCPHLADSEEASAPRIHSTSEWQNALPYNQIPGPKPIPILGNTWRLMPIIGQYTISDVAKISSLLHDRYGRIVRFGGLIGRPDLLFIYDADEIEKCYRSEGPTPFRPSMPSLVKYKSVVRKDFFGDLGGVVGVHGEPWREFRSRVQKPVLQLSTIRRYLQPLEVITEDFLVRCENLLDENQELPEDFDNEIHKWSLECIGRVALDTRLGCLESNLKPDSEPQQIIDAAKYALRNVATLELKAPYWRYFPTPLWTRYVKNMNFFVGVCMKYIQSATERLKTQDPSLRAGEPSLVEKVILSQKDEKIATIMALDLILVGIDTISMAVCSMLYQLATRPVDQQKVHEELKRLLPDPNTPLTIPLLDQMHHLKGFIKEVFRMYSTVIGNGRTLMEDSVICGYQVPKGVQAVFPTIVTGNMEEYVTDAATFRPERWLKPQHGGTPGKLHPFASLPYGYGARMCLGRRFADLEMQILLAKLLRNYKLEYNHKPLDYAVTFMYAPDGPLRFKMTRV.

C502 serves as a coordination point for heme.

It belongs to the cytochrome P450 family. It depends on heme as a cofactor.

Its subcellular location is the mitochondrion membrane. The sequence is that of Probable cytochrome P450 301a1, mitochondrial (Cyp301a1) from Drosophila melanogaster (Fruit fly).